The following is a 348-amino-acid chain: Carbamoyl phosphate synthase small chain (348 aa).

The tract at residues Met1 to Arg167 is CPSase. Residues Ser45, Gly213, and Gly215 each contribute to the L-glutamine site. One can recognise a Glutamine amidotransferase type-1 domain in the interval Arg168–Gly348. Cys242 functions as the Nucleophile in the catalytic mechanism. The L-glutamine site is built by Phe243, Gln246, Asn282, Gly284, and Tyr285. Residues His321 and Glu323 contribute to the active site.

It belongs to the CarA family. As to quaternary structure, composed of two chains; the small (or glutamine) chain promotes the hydrolysis of glutamine to ammonia, which is used by the large (or ammonia) chain to synthesize carbamoyl phosphate. Tetramer of heterodimers (alpha,beta)4.

It catalyses the reaction hydrogencarbonate + L-glutamine + 2 ATP + H2O = carbamoyl phosphate + L-glutamate + 2 ADP + phosphate + 2 H(+). The catalysed reaction is L-glutamine + H2O = L-glutamate + NH4(+). The protein operates within amino-acid biosynthesis; L-arginine biosynthesis; carbamoyl phosphate from bicarbonate: step 1/1. It functions in the pathway pyrimidine metabolism; UMP biosynthesis via de novo pathway; (S)-dihydroorotate from bicarbonate: step 1/3. Functionally, small subunit of the glutamine-dependent carbamoyl phosphate synthetase (CPSase). CPSase catalyzes the formation of carbamoyl phosphate from the ammonia moiety of glutamine, carbonate, and phosphate donated by ATP, constituting the first step of 2 biosynthetic pathways, one leading to arginine and/or urea and the other to pyrimidine nucleotides. The small subunit (glutamine amidotransferase) binds and cleaves glutamine to supply the large subunit with the substrate ammonia. The sequence is that of Carbamoyl phosphate synthase small chain from Thermoplasma acidophilum (strain ATCC 25905 / DSM 1728 / JCM 9062 / NBRC 15155 / AMRC-C165).